The chain runs to 487 residues: Probable cytosol aminopeptidase (487 aa).

K253 and D258 together coordinate Mn(2+). K265 is an active-site residue. Mn(2+) is bound by residues D277, D337, and E339. R341 is a catalytic residue.

This sequence belongs to the peptidase M17 family. Requires Mn(2+) as cofactor.

It localises to the cytoplasm. It catalyses the reaction Release of an N-terminal amino acid, Xaa-|-Yaa-, in which Xaa is preferably Leu, but may be other amino acids including Pro although not Arg or Lys, and Yaa may be Pro. Amino acid amides and methyl esters are also readily hydrolyzed, but rates on arylamides are exceedingly low.. The catalysed reaction is Release of an N-terminal amino acid, preferentially leucine, but not glutamic or aspartic acids.. In terms of biological role, presumably involved in the processing and regular turnover of intracellular proteins. Catalyzes the removal of unsubstituted N-terminal amino acids from various peptides. The sequence is that of Probable cytosol aminopeptidase from Parasynechococcus marenigrum (strain WH8102).